A 158-amino-acid chain; its full sequence is 6,7-dimethyl-8-ribityllumazine synthase (158 aa).

Residues Phe-24, 62 to 64 (CFE), and 86 to 88 (AVI) contribute to the 5-amino-6-(D-ribitylamino)uracil site. 91-92 (DT) serves as a coordination point for (2S)-2-hydroxy-3-oxobutyl phosphate. The Proton donor role is filled by His-94. Phe-119 is a 5-amino-6-(D-ribitylamino)uracil binding site. Arg-133 is a binding site for (2S)-2-hydroxy-3-oxobutyl phosphate.

The protein belongs to the DMRL synthase family.

The catalysed reaction is (2S)-2-hydroxy-3-oxobutyl phosphate + 5-amino-6-(D-ribitylamino)uracil = 6,7-dimethyl-8-(1-D-ribityl)lumazine + phosphate + 2 H2O + H(+). It functions in the pathway cofactor biosynthesis; riboflavin biosynthesis; riboflavin from 2-hydroxy-3-oxobutyl phosphate and 5-amino-6-(D-ribitylamino)uracil: step 1/2. In terms of biological role, catalyzes the formation of 6,7-dimethyl-8-ribityllumazine by condensation of 5-amino-6-(D-ribitylamino)uracil with 3,4-dihydroxy-2-butanone 4-phosphate. This is the penultimate step in the biosynthesis of riboflavin. The chain is 6,7-dimethyl-8-ribityllumazine synthase from Picosynechococcus sp. (strain ATCC 27264 / PCC 7002 / PR-6) (Agmenellum quadruplicatum).